Reading from the N-terminus, the 239-residue chain is Phosphoglycolate phosphatase (239 aa).

Catalysis depends on Asp14, which acts as the Nucleophile. Residues Asp14 and Asp16 each contribute to the Mg(2+) site. Lys160 serves as a coordination point for substrate. Mg(2+)-binding residues include Asp183 and Asp187.

This sequence belongs to the archaeal SPP-like hydrolase family. Mg(2+) is required as a cofactor.

It carries out the reaction 2-phosphoglycolate + H2O = glycolate + phosphate. Its function is as follows. Catalyzes the dephosphorylation of 2-phosphoglycolate. The sequence is that of Phosphoglycolate phosphatase from Aeropyrum pernix (strain ATCC 700893 / DSM 11879 / JCM 9820 / NBRC 100138 / K1).